Here is a 1065-residue protein sequence, read N- to C-terminus: DNA-directed RNA polymerase subunit beta (1065 aa).

The protein belongs to the RNA polymerase beta chain family. In plastids the minimal PEP RNA polymerase catalytic core is composed of four subunits: alpha, beta, beta', and beta''. When a (nuclear-encoded) sigma factor is associated with the core the holoenzyme is formed, which can initiate transcription.

The protein localises to the plastid. Its subcellular location is the chloroplast. It carries out the reaction RNA(n) + a ribonucleoside 5'-triphosphate = RNA(n+1) + diphosphate. In terms of biological role, DNA-dependent RNA polymerase catalyzes the transcription of DNA into RNA using the four ribonucleoside triphosphates as substrates. In Marchantia polymorpha (Common liverwort), this protein is DNA-directed RNA polymerase subunit beta.